Reading from the N-terminus, the 235-residue chain is Cobalt transport protein CbiM (235 aa).

Transmembrane regions (helical) follow at residues 6-26 (GVLP…FVVH), 43-63 (LLLA…LPSV), 85-105 (MAFM…HGGI), 108-128 (LGAN…GAYV), 133-153 (LGGP…LSTY), and 181-201 (IFAI…ILLF).

This sequence belongs to the CbiM family. As to quaternary structure, forms an energy-coupling factor (ECF) transporter complex composed of an ATP-binding protein (A component, CbiO), a transmembrane protein (T component, CbiQ) and 2 possible substrate-capture proteins (S components, CbiM and CbiN) of unknown stoichimetry.

It localises to the cell membrane. It functions in the pathway cofactor biosynthesis; adenosylcobalamin biosynthesis. Part of the energy-coupling factor (ECF) transporter complex CbiMNOQ involved in cobalt import. This chain is Cobalt transport protein CbiM, found in Propionibacterium freudenreichii subsp. shermanii (strain ATCC 9614 / DSM 4902 / CIP 103027 / NCIMB 8099 / CIRM-BIA1).